We begin with the raw amino-acid sequence, 1192 residues long: Pyruvate carboxylase (1192 aa).

The interval 1–23 is disordered; it reads MAAPRQPEEAVDDTEFIDDHHDQ. The Biotin carboxylation domain maps to 40-492; it reads QFQKILVANR…WTTFIDDTPE (453 aa). The ATP site is built by K158, E242, and H277. One can recognise an ATP-grasp domain in the interval 162-359; sequence RQLAIRCDVP…IVAAQIQIAA (198 aa). R334 is an active-site residue. One can recognise a Pyruvate carboxyltransferase domain in the interval 578–846; the sequence is CLIMDTTWRD…DPGLNSAQVR (269 aa). Substrate is bound by residues 586–590 and R659; that span reads RDAHQ. D587 provides a ligand contact to a divalent metal cation. Residues K755, H785, and H787 each coordinate a divalent metal cation. K755 is subject to N6-carboxylysine. Position 920 (T920) interacts with substrate. Positions 1115 to 1190 constitute a Biotinyl-binding domain; that stretch reads KAELGDSSQV…DGQDLVCKIV (76 aa). K1156 bears the N6-biotinyllysine mark.

Biotin serves as cofactor. It depends on Zn(2+) as a cofactor.

It localises to the cytoplasm. The catalysed reaction is hydrogencarbonate + pyruvate + ATP = oxaloacetate + ADP + phosphate + H(+). The protein operates within carbohydrate biosynthesis; gluconeogenesis. Functionally, pyruvate carboxylase catalyzes a 2-step reaction, involving the ATP-dependent carboxylation of the covalently attached biotin in the first step and the transfer of the carboxyl group to pyruvate in the second. This is Pyruvate carboxylase (pyc) from Aspergillus niger.